Here is a 442-residue protein sequence, read N- to C-terminus: Tubulin beta chain (442 aa).

GTP-binding residues include glutamine 11, glutamate 69, serine 138, glycine 142, threonine 143, glycine 144, asparagine 204, and asparagine 226. Glutamate 69 contacts Mg(2+).

Belongs to the tubulin family. Dimer of alpha and beta chains. A typical microtubule is a hollow water-filled tube with an outer diameter of 25 nm and an inner diameter of 15 nM. Alpha-beta heterodimers associate head-to-tail to form protofilaments running lengthwise along the microtubule wall with the beta-tubulin subunit facing the microtubule plus end conferring a structural polarity. Microtubules usually have 13 protofilaments but different protofilament numbers can be found in some organisms and specialized cells. Mg(2+) serves as cofactor.

Its subcellular location is the cytoplasm. It is found in the cytoskeleton. Tubulin is the major constituent of microtubules, a cylinder consisting of laterally associated linear protofilaments composed of alpha- and beta-tubulin heterodimers. Microtubules grow by the addition of GTP-tubulin dimers to the microtubule end, where a stabilizing cap forms. Below the cap, tubulin dimers are in GDP-bound state, owing to GTPase activity of alpha-tubulin. This chain is Tubulin beta chain (bPT2), found in Paramecium tetraurelia.